Reading from the N-terminus, the 331-residue chain is Ribosomal RNA small subunit methyltransferase H (331 aa).

Residues 39 to 41 (GGY), aspartate 56, phenylalanine 83, aspartate 100, and glutamine 107 each bind S-adenosyl-L-methionine.

Belongs to the methyltransferase superfamily. RsmH family.

The protein resides in the cytoplasm. The enzyme catalyses cytidine(1402) in 16S rRNA + S-adenosyl-L-methionine = N(4)-methylcytidine(1402) in 16S rRNA + S-adenosyl-L-homocysteine + H(+). Its function is as follows. Specifically methylates the N4 position of cytidine in position 1402 (C1402) of 16S rRNA. The sequence is that of Ribosomal RNA small subunit methyltransferase H from Bartonella bacilliformis (strain ATCC 35685 / KC583 / Herrer 020/F12,63).